The sequence spans 271 residues: 3-methyl-2-oxobutanoate hydroxymethyltransferase (271 aa).

2 residues coordinate Mg(2+): D51 and D90. 3-methyl-2-oxobutanoate is bound by residues 51 to 52 (DS), D90, and K118. Mg(2+) is bound at residue E120. The active-site Proton acceptor is E186.

It belongs to the PanB family. Homodecamer; pentamer of dimers. Mg(2+) serves as cofactor.

Its subcellular location is the cytoplasm. The enzyme catalyses 3-methyl-2-oxobutanoate + (6R)-5,10-methylene-5,6,7,8-tetrahydrofolate + H2O = 2-dehydropantoate + (6S)-5,6,7,8-tetrahydrofolate. It participates in cofactor biosynthesis; (R)-pantothenate biosynthesis; (R)-pantoate from 3-methyl-2-oxobutanoate: step 1/2. Catalyzes the reversible reaction in which hydroxymethyl group from 5,10-methylenetetrahydrofolate is transferred onto alpha-ketoisovalerate to form ketopantoate. In Stenotrophomonas maltophilia (strain R551-3), this protein is 3-methyl-2-oxobutanoate hydroxymethyltransferase.